The sequence spans 571 residues: Proline--tRNA ligase (571 aa).

This sequence belongs to the class-II aminoacyl-tRNA synthetase family. ProS type 1 subfamily. In terms of assembly, homodimer.

It is found in the cytoplasm. It carries out the reaction tRNA(Pro) + L-proline + ATP = L-prolyl-tRNA(Pro) + AMP + diphosphate. Catalyzes the attachment of proline to tRNA(Pro) in a two-step reaction: proline is first activated by ATP to form Pro-AMP and then transferred to the acceptor end of tRNA(Pro). As ProRS can inadvertently accommodate and process non-cognate amino acids such as alanine and cysteine, to avoid such errors it has two additional distinct editing activities against alanine. One activity is designated as 'pretransfer' editing and involves the tRNA(Pro)-independent hydrolysis of activated Ala-AMP. The other activity is designated 'posttransfer' editing and involves deacylation of mischarged Ala-tRNA(Pro). The misacylated Cys-tRNA(Pro) is not edited by ProRS. The sequence is that of Proline--tRNA ligase from Vibrio campbellii (strain ATCC BAA-1116).